The sequence spans 22 residues: Unknown protein 20 from 2D-PAGE (22 aa).

The sequence is that of Unknown protein 20 from 2D-PAGE from Bombyx mori (Silk moth).